The primary structure comprises 73 residues: Mu-conotoxin SIIIA (73 aa).

The N-terminal stretch at methionine 1–alanine 20 is a signal peptide. The segment at alanine 20–isoleucine 40 is disordered. A propeptide spanning residues leucine 21–aspartate 49 is cleaved from the precursor. The segment covering proline 28–isoleucine 40 has biased composition (basic and acidic residues). Glutamine 52 is modified (pyrrolidone carboxylic acid). 3 disulfide bridges follow: cysteine 54–cysteine 64, cysteine 55–cysteine 70, and cysteine 59–cysteine 71. Cysteine amide is present on cysteine 71.

This sequence belongs to the conotoxin M superfamily. As to expression, expressed by the venom duct.

It localises to the secreted. In terms of biological role, mu-conotoxins block voltage-gated sodium channels (Nav). This toxin moderately blocks rNav1.1/SCN1A, rNav1.2/SCN2A, rNav1.3/SCN3A, rNav1.4/SCN4A, and mNav1.6/SCN8A. The protein is Mu-conotoxin SIIIA of Conus striatus (Striated cone).